Consider the following 163-residue polypeptide: NADPH-dependent 7-cyano-7-deazaguanine reductase (163 aa).

Cysteine 54 functions as the Thioimide intermediate in the catalytic mechanism. Aspartate 61 (proton donor) is an active-site residue. Substrate is bound by residues 76–78 (VES) and 95–96 (HE).

Belongs to the GTP cyclohydrolase I family. QueF type 1 subfamily.

The protein resides in the cytoplasm. The catalysed reaction is 7-aminomethyl-7-carbaguanine + 2 NADP(+) = 7-cyano-7-deazaguanine + 2 NADPH + 3 H(+). The protein operates within tRNA modification; tRNA-queuosine biosynthesis. Catalyzes the NADPH-dependent reduction of 7-cyano-7-deazaguanine (preQ0) to 7-aminomethyl-7-deazaguanine (preQ1). The protein is NADPH-dependent 7-cyano-7-deazaguanine reductase of Streptococcus thermophilus (strain CNRZ 1066).